A 154-amino-acid chain; its full sequence is MPAKAVCVLRGDVSGTVFFDQQDEKSPVVVSGEVQGLTKGKHGFHVHEFGDNTNGCTSAGAHFNPEKQDHGGPSSAVRHVGDLGNIEAIEDSGVTKVSIQDSQISLHGPNSIIGRTLVVHADPDDLGLGGHELSKTTGNAGGRIACGVIGLAKI.

Positions 45, 47, and 62 each coordinate Cu cation. An intrachain disulfide couples Cys-56 to Cys-146. Zn(2+) contacts are provided by His-62, His-70, His-79, and Asp-82. His-120 is a binding site for Cu cation.

The protein belongs to the Cu-Zn superoxide dismutase family. In terms of assembly, homodimer. It depends on Cu cation as a cofactor. Zn(2+) is required as a cofactor.

It is found in the cytoplasm. The catalysed reaction is 2 superoxide + 2 H(+) = H2O2 + O2. In terms of biological role, destroys radicals which are normally produced within the cells and which are toxic to biological systems. The polypeptide is Superoxide dismutase [Cu-Zn] (Bombyx mori (Silk moth)).